A 362-amino-acid chain; its full sequence is Putative gustatory receptor 89a (362 aa).

The Cytoplasmic segment spans residues 1 to 38 (MLRFPHVCGLCLLLKYWQILALAPFRTSEPMVARCQRW). The helical transmembrane segment at 39 to 59 (MTLIAVFRWLLLTSMAPFVLW) threads the bilayer. The Extracellular portion of the chain corresponds to 60-74 (KSAAMYEATNVRHSM). The chain crosses the membrane as a helical span at residues 75 to 95 (VFKTIALATMTGDVCISLALL). Topologically, residues 96 to 126 (GNHLWNRRELANLVNDLARLHRRRRLSWWST) are cytoplasmic. The chain crosses the membrane as a helical span at residues 127–147 (LFLWLKLLLSLYDLLCSVPFL). Residues 148-166 (KGAGGRLPWSQLVAYGVQL) are Extracellular-facing. Residues 167–187 (YFQHVASVYGNGIFGGILLML) traverse the membrane as a helical segment. Residues 188–223 (ECYNQLEREEPTNLARLLQKEYSWLRLIQRFVKLFQ) are Cytoplasmic-facing. A helical transmembrane segment spans residues 224–244 (LGIFLLVLGSFVNIMVNIYAF). The Extracellular portion of the chain corresponds to 245–255 (MSYYVSLHGVP). The helical transmembrane segment at 256 to 276 (LTISNNCLVLAIQLYAVILAA) threads the bilayer. Residues 277-333 (HLCQVRSAKLRKKCLQLEYVPEGLTQEQAMASTPFPVLTPTGNVKFRILGVFILDNS) are Cytoplasmic-facing. The helical transmembrane segment at 334–354 (FWLFLVSYAMNFIVVILQTSF) threads the bilayer. Residues 355-362 (EHINHGEI) are Extracellular-facing.

The protein belongs to the insect chemoreceptor superfamily. Gustatory receptor (GR) family. Gr77a subfamily.

The protein localises to the cell membrane. In terms of biological role, probable gustatory receptor which mediates acceptance or avoidance behavior, depending on its substrates. The chain is Putative gustatory receptor 89a (Gr89a) from Drosophila melanogaster (Fruit fly).